Consider the following 591-residue polypeptide: Probable methyltransferase PMT6 (591 aa).

At 1–13 the chain is on the cytoplasmic side; sequence MRGSVIGAERSGQ. Residues 14–34 form a helical; Signal-anchor for type II membrane protein membrane-spanning segment; sequence TIMVALVLMVGSFYTGSLFGT. The Lumenal portion of the chain corresponds to 35–591; the sequence is NQPIYVSHPS…FCRKRFWAII (557 aa). Residues N87, N99, N146, N193, N323, N436, N473, and N515 are each glycosylated (N-linked (GlcNAc...) asparagine).

This sequence belongs to the methyltransferase superfamily.

It localises to the endoplasmic reticulum membrane. The protein is Probable methyltransferase PMT6 of Arabidopsis thaliana (Mouse-ear cress).